Here is a 168-residue protein sequence, read N- to C-terminus: Iron-sulfur cluster assembly enzyme ISCU (168 aa).

The transit peptide at M1–L35 directs the protein to the mitochondrion. S15 carries the post-translational modification Phosphoserine. C70 acts as the Cysteine persulfide intermediate in catalysis. Position 70 is a cysteine persulfide (C70). Zn(2+) is bound by residues D72, C96, and C139. C139 serves as the catalytic Cysteine persulfide intermediate. Cysteine persulfide is present on C139.

It belongs to the NifU family. As to quaternary structure, homodimer; Tyr-36-mediated dimerization of two iron- and sulfide-containing ISCU subunit bind to the cysteine desulfurase complex. Component of the mitochondrial core iron-sulfur cluster (ISC) complex composed of NFS1, LYRM4, NDUFAB1, ISCU, FXN, and FDX2; this complex is a heterohexamer containing two copies of each monomer. Interacts (D-state) with NFS1 (homodimer form); each monomer interacts with the C-terminal regions of each NFS1 monomer. Interacts (monomer form) with FXN (via ferrous form); the interaction is possible when both are bound to the dimeric form of the cysteine desulfurase complex (NFS1:LYRM4) and enhances FXN interaction to the dimeric form of the cysteine desulfurase complex (NFS1:LYRM4). Interacts with GLRX5. Interacts (D-state) with HSPA9. Interacts (S-state) with HSCB; this interaction stimulates the ATPase activity of HSPA9. Component of a complex composed of FXN, NFS1, LYRM4 and ISCU. In terms of processing, cysteine persulfide is reduced by thiol-containing molecules such as glutathione and L-cysteine. Phosphorylation at Ser-15 is required for ISCU protein stabilization in the cytosol, whereas dephosphorylation of Ser-15, due to the inhibition of mTORC1 (mammalian target of rapamycin complex 1) complex, leads to degradation of the precursor form and ultimately to a decrease in the mitochondrial mature form.

Its subcellular location is the mitochondrion. Mitochondrial scaffold protein, of the core iron-sulfur cluster (ISC) assembly complex, that provides the structural architecture on which the [2Fe-2S] clusters are assembled. The core iron-sulfur cluster (ISC) assembly complex is involved in the de novo synthesis of a [2Fe-2S] cluster, the first step of the mitochondrial iron-sulfur protein biogenesis. This process is initiated by the cysteine desulfurase complex (NFS1:LYRM4:NDUFAB1) that produces persulfide which is delivered on the scaffold protein ISCU in a FXN-dependent manner. Then this complex is stabilized by FDX2 which provides reducing equivalents to accomplish the [2Fe-2S] cluster assembly. Finally, the [2Fe-2S] cluster is transferred from ISCU to chaperone proteins, including HSCB, HSPA9 and GLRX5. Exists as two slow interchanging conformational states, a structured (S) and disordered (D) form. May modulate NFS1 desulfurase activity in a zinc-dependent manner. Modulates the interaction between FXN and the cysteine desulfurase complex. This chain is Iron-sulfur cluster assembly enzyme ISCU, found in Mus musculus (Mouse).